A 403-amino-acid chain; its full sequence is Probable eukaryotic initiation factor 4A (403 aa).

The tract at residues 1–29 (MSQQDRVAPQDQDSFLDDQPGVRPIPSFD) is disordered. Positions 26–54 (PSFDDMPLHQNLLRGIYSYGFEKPSSIQQ) match the Q motif motif. The 174-residue stretch at 57-230 (IAPFTRGGDI…KKFMRDPVRI (174 aa)) folds into the Helicase ATP-binding domain. Residue 70 to 77 (AQSGTGKT) participates in ATP binding. The DEAD box signature appears at 178 to 181 (DEAD). The region spanning 241 to 401 (GIKQFFIAVE…ELPVDFAAYL (161 aa)) is the Helicase C-terminal domain.

This sequence belongs to the DEAD box helicase family. eIF4A subfamily. In terms of assembly, eIF4F is a multi-subunit complex, the composition of which varies with external and internal environmental conditions. It is composed of at least EIF4A, EIF4E and EIF4G.

It carries out the reaction ATP + H2O = ADP + phosphate + H(+). Its function is as follows. ATP-dependent RNA helicase which is a subunit of the eIF4F complex involved in cap recognition and is required for mRNA binding to ribosome. In the current model of translation initiation, eIF4A unwinds RNA secondary structures in the 5'-UTR of mRNAs which is necessary to allow efficient binding of the small ribosomal subunit, and subsequent scanning for the initiator codon. This is Probable eukaryotic initiation factor 4A from Leishmania braziliensis.